Here is a 324-residue protein sequence, read N- to C-terminus: UDP-N-acetylenolpyruvoylglucosamine reductase (324 aa).

The region spanning 38-217 is the FAD-binding PCMH-type domain; the sequence is AGGLAELMFQ…IRAEMDAVRQ (180 aa). Arg-183 is an active-site residue. Catalysis depends on Ser-232, which acts as the Proton donor. Residue Glu-302 is part of the active site.

Belongs to the MurB family. It depends on FAD as a cofactor.

The protein resides in the cytoplasm. It catalyses the reaction UDP-N-acetyl-alpha-D-muramate + NADP(+) = UDP-N-acetyl-3-O-(1-carboxyvinyl)-alpha-D-glucosamine + NADPH + H(+). It functions in the pathway cell wall biogenesis; peptidoglycan biosynthesis. Cell wall formation. This is UDP-N-acetylenolpyruvoylglucosamine reductase from Allorhizobium ampelinum (strain ATCC BAA-846 / DSM 112012 / S4) (Agrobacterium vitis (strain S4)).